The sequence spans 215 residues: Deoxyribose-phosphate aldolase (215 aa).

The active-site Proton donor/acceptor is the Asp-90. Lys-152 functions as the Schiff-base intermediate with acetaldehyde in the catalytic mechanism. Catalysis depends on Lys-181, which acts as the Proton donor/acceptor.

The protein belongs to the DeoC/FbaB aldolase family. DeoC type 1 subfamily.

The protein localises to the cytoplasm. It catalyses the reaction 2-deoxy-D-ribose 5-phosphate = D-glyceraldehyde 3-phosphate + acetaldehyde. It functions in the pathway carbohydrate degradation; 2-deoxy-D-ribose 1-phosphate degradation; D-glyceraldehyde 3-phosphate and acetaldehyde from 2-deoxy-alpha-D-ribose 1-phosphate: step 2/2. Functionally, catalyzes a reversible aldol reaction between acetaldehyde and D-glyceraldehyde 3-phosphate to generate 2-deoxy-D-ribose 5-phosphate. The protein is Deoxyribose-phosphate aldolase of Ureaplasma urealyticum serovar 10 (strain ATCC 33699 / Western).